The chain runs to 532 residues: NADH-quinone oxidoreductase subunit N 2 (532 aa).

A run of 14 helical transmembrane segments spans residues 37-57, 63-83, 107-127, 133-153, 158-178, 192-212, 241-261, 276-296, 302-322, 336-356, 367-387, 411-431, 444-464, and 504-524; these read VAPP…DLFL, RLLG…LIPL, FTLV…LLSL, LPAG…ALLP, LATL…LVGI, FFLS…FVYA, VALT…HFWV, LSVV…VVAF, VWGP…NVAA, LLAW…AAAA, VAYA…AAVV, LALG…IGLF, GLGW…YYYL, and TAIV…QTVL.

It belongs to the complex I subunit 2 family. NDH-1 is composed of 14 different subunits. Subunits NuoA, H, J, K, L, M, N constitute the membrane sector of the complex.

It localises to the cell membrane. It carries out the reaction a quinone + NADH + 5 H(+)(in) = a quinol + NAD(+) + 4 H(+)(out). Functionally, NDH-1 shuttles electrons from NADH, via FMN and iron-sulfur (Fe-S) centers, to quinones in the respiratory chain. The immediate electron acceptor for the enzyme in this species is believed to be a menaquinone. Couples the redox reaction to proton translocation (for every two electrons transferred, four hydrogen ions are translocated across the cytoplasmic membrane), and thus conserves the redox energy in a proton gradient. This is NADH-quinone oxidoreductase subunit N 2 from Streptomyces griseus subsp. griseus (strain JCM 4626 / CBS 651.72 / NBRC 13350 / KCC S-0626 / ISP 5235).